Reading from the N-terminus, the 341-residue chain is MLEEEILQKLQKFGLTKYESLAYLTLLKLGPSKATDVTKESGIPHTRIYDVLSSLARKGFVDIVHGTPRLYAPVNPEIVLEKIREDLISDIERLKKAFQELYREVHGEELPEIWTVHGFENTIDRAQHIIRSAKHDILINTPYEFLEYLRGVLEKRNDVLIIVISNFSEIPLWLRNKNNVILARSGQAPWLLGTWVIGDINYALFFGTLPEDKGKERFYSFWVKSTRLIQNYVHWFYTMYFDNSEIVKPLNYERMEKPLTLSHIRTVITVLKQAGLPRNIEVIGRSLADKKQVTIKGKVIDYEYTPLTANITVKTDNKKIKVGGLGSYLEDIEGESFILLD.

The segment at residues 32–53 (SKATDVTKESGIPHTRIYDVLS) is a DNA-binding region (H-T-H motif).

The protein belongs to the transcriptional regulator TrmB family. As to quaternary structure, homotetramer. Forms homooctamers in the presence of maltotriose or maltose.

Repressor activity is regulated by binding of different sugars to TrmBL1. Binding of maltose and maltotriose results in derepression of the target genes. However, high sugar concentration results in formation of octamers with high affinity for DNA, which may prevent transcription of target genes. In terms of biological role, global transcriptional repressor of the maltodextrin transport gene cluster (mdxE operon) and most likely of all genes encoding glycolytic enzymes. Acts by binding to the conserved TGM (Thermococcales-Glycolytic-Motif) sequences in their promoter region. Can also interact with non-TGM sequences. This is HTH-type sugar sensing transcriptional regulator TrmBL1 (trmBL1) from Pyrococcus furiosus (strain ATCC 43587 / DSM 3638 / JCM 8422 / Vc1).